We begin with the raw amino-acid sequence, 195 residues long: Phenoloxidase subunit 1 (195 aa).

His10 contacts Cu cation. 3 N-linked (GlcNAc...) asparagine glycosylation sites follow: Asn77, Asn97, and Asn98.

The protein belongs to the tyrosinase family. As to quaternary structure, heterodimer. Cu(2+) is required as a cofactor.

It localises to the secreted. The enzyme catalyses 2 L-dopa + O2 = 2 L-dopaquinone + 2 H2O. The catalysed reaction is L-tyrosine + O2 = L-dopaquinone + H2O. Functionally, this is a copper-containing oxidase that functions in the formation of pigments such as melanins and other polyphenolic compounds. Catalyzes the rate-limiting conversions of tyrosine to DOPA, DOPA to DOPA-quinone and possibly 5,6 dihydroxyindole to indole-5'6 quinone. This Simulium damnosum (Black fly) protein is Phenoloxidase subunit 1.